The sequence spans 1712 residues: Latent-transforming growth factor beta-binding protein 1 (1712 aa).

An N-terminal signal peptide occupies residues 1–23 (MAGAWLRWGLLLWAGLLAWSAHG). The tract at residues 65 to 118 (TAASSRALAGPPAERTRRTSQPGGAALPGLRSPLPPEPARPGGPSRQLHSKAGA) is disordered. The EGF-like 1 domain maps to 181–213 (TKPSCVPPCQNGGMCLRPQLCVCKPGSKGKACE). 3 disulfide bridges follow: Cys185–Cys195, Cys189–Cys201, and Cys203–Cys212. Residues Asn339 and Asn370 are each glycosylated (N-linked (GlcNAc...) asparagine). An EGF-like 2 domain is found at 391 to 423 (RVVICHLPCMNGGQCSSRDKCQCPPNFTGKLCQ). Intrachain disulfides connect Cys395–Cys405, Cys399–Cys411, Cys413–Cys422, Cys551–Cys573, Cys560–Cys586, and Cys574–Cys589. The N-linked (GlcNAc...) asparagine glycan is linked to Asn416. A TB 1 domain is found at 549 to 601 (GRCFQETIGSQCGKALPGLSKQEDCCGTVGTSWGFNKCQKCPKKQSYHGYTQM). Asn612 carries an N-linked (GlcNAc...) asparagine glycan. Residues 618–658 (DINECQLQGVCPNGECLNTMGSYRCSCKMGFGPDPTFSSCV) form the EGF-like 3; calcium-binding domain. 7 cysteine pairs are disulfide-bonded: Cys622–Cys633, Cys628–Cys642, Cys644–Cys657, Cys671–Cys694, Cys681–Cys706, Cys695–Cys709, and Cys696–Cys721. The O-linked (Glc) serine glycan is linked to Ser639. The 53-residue stretch at 669–721 (GPCYRLVSPGRHCMHPLSVHLTKQICCCSVGKAWGPHCEKCPLPGTAAFKEIC) folds into the TB 2 domain. Residues 753–799 (NTQPVAKSTHPPPLPAKEEPVEALTSSWEHGPRGAEPEVVTAPPEKE) are disordered. 2 O-linked (GalNAc...) threonine glycosylation sites follow: Thr761 and Thr793. Residues 865 to 906 (EINECTVNPDICGAGHCINLPVRYTCICYEGYKFSEQLRKCV) enclose the EGF-like 4; calcium-binding domain. Disulfide bonds link Cys869-Cys881, Cys876-Cys890, Cys892-Cys905, Cys911-Cys923, Cys918-Cys932, Cys934-Cys947, Cys953-Cys964, Cys959-Cys973, Cys976-Cys988, Cys994-Cys1005, Cys1000-Cys1014, Cys1017-Cys1028, Cys1034-Cys1045, Cys1040-Cys1054, Cys1056-Cys1069, Cys1075-Cys1086, Cys1081-Cys1095, Cys1097-Cys1110, Cys1116-Cys1127, Cys1122-Cys1136, Cys1138-Cys1151, Cys1157-Cys1169, Cys1164-Cys1178, Cys1180-Cys1192, Cys1198-Cys1210, Cys1204-Cys1219, Cys1221-Cys1234, Cys1240-Cys1252, Cys1246-Cys1261, Cys1263-Cys1276, Cys1282-Cys1294, Cys1289-Cys1303, Cys1305-Cys1319, Cys1340-Cys1363, Cys1350-Cys1375, Cys1364-Cys1380, and Cys1365-Cys1392. One can recognise an EGF-like 5; calcium-binding domain in the interval 907-948 (DIDECAQVRHLCSQGRCENTEGSFLCVCPAGFMASEEGTNCI). An O-linked (Glc) serine glycan is attached at Ser929. An EGF-like 6; calcium-binding domain is found at 949–989 (DVDECLRPDMCRDGRCINTAGAFRCEYCDSGYRMSRRGYCE). Position 966 is a (3R)-3-hydroxyasparagine (Asn966). One can recognise an EGF-like 7; calcium-binding domain in the interval 990–1029 (DIDECLKPSTCPEEQCVNTPGSYQCVPCTEGFRGWNGQCL). Ser1011 carries O-linked (Glc) serine glycosylation. Residues 1030–1070 (DVDECLQPKVCTNGSCTNLEGSYMCSCHRGYSPTPDHRHCQ) form the EGF-like 8; calcium-binding domain. Residue Asn1042 is glycosylated (N-linked (GlcNAc...) asparagine). An O-linked (Glc) serine glycan is attached at Ser1051. Residues 1071–1111 (DIDECQQGNLCMNGQCRNTDGSFRCTCGQGYQLSAAKDQCE) enclose the EGF-like 9; calcium-binding domain. An EGF-like 10; calcium-binding domain is found at 1112–1152 (DIDECEHHHLCSHGQCRNTEGSFQCVCNQGYRASVLGDHCE). Asn1129 carries the (3R)-3-hydroxyasparagine modification. Ser1133 is a glycosylation site (O-linked (Glc) serine). An EGF-like 11; calcium-binding domain is found at 1153 to 1193 (DINECLEDSSVCQGGDCINTAGSYDCTCPDGFQLNDNKGCQ). The EGF-like 12; calcium-binding domain occupies 1194–1235 (DINECAQPGLCGSHGECLNTQGSFHCVCEQGFSISADGRTCE). Ser1216 carries an O-linked (Glc) serine glycan. In terms of domain architecture, EGF-like 13; calcium-binding spans 1236-1277 (DIDECVNNTVCDSHGFCDNTAGSFRCLCYQGFQAPQDGQGCV). An N-linked (GlcNAc...) asparagine glycan is attached at Asn1242. In terms of domain architecture, EGF-like 14; calcium-binding spans 1278–1320 (DVNECELLSGVCGEAFCENVEGSFLCVCADENQEYSPMTGQCR). Residues 1335 to 1402 (EEKKECYYNL…PRGKGLVPAG (68 aa)) are 8-Cys3 region. Positions 1338-1392 (KECYYNLNDASLCDNVLAPNVTKQECCCTSGAGWGDNCEIFPCPVQGTAEFTEMC) constitute a TB 3 domain. An N-linked (GlcNAc...) asparagine glycan is attached at Asn1357. Ser1405 is modified (phosphoserine). The EGF-like 15; calcium-binding domain maps to 1415–1457 (DADECLLFGEEICKNGYCLNTQPGYECYCKQGTYYDPVKLQCF). Intrachain disulfides connect Cys1419–Cys1432, Cys1427–Cys1441, Cys1443–Cys1456, Cys1462–Cys1473, Cys1468–Cys1482, Cys1484–Cys1497, Cys1517–Cys1541, Cys1527–Cys1553, Cys1542–Cys1556, and Cys1543–Cys1568. The region spanning 1458-1498 (DMDECQDPNSCIDGQCVNTEGSYNCFCTHPMVLDASEKRCV) is the EGF-like 16; calcium-binding domain. O-linked (Glc) serine glycosylation occurs at Ser1479. Residues 1498–1712 (VQPTESNEQI…LNLDKESDLE (215 aa)) are C-terminal domain. In terms of domain architecture, TB 4 spans 1515–1568 (DLCWEHLSEEYVCSRPLVGKQTTYTECCCLYGEAWGMQCALCPMKDSDDYAQLC). Residues Ser1588 and Ser1607 each carry the phosphoserine modification. In terms of domain architecture, EGF-like 17 spans 1612–1652 (QAEECGILNGCENGRCVRVQEGYTCDCFDGYHLDMAKMTCV). Intrachain disulfides connect Cys1616–Cys1627, Cys1622–Cys1636, Cys1638–Cys1651, Cys1657–Cys1672, Cys1667–Cys1681, and Cys1683–Cys1696. An EGF-like 18; calcium-binding domain is found at 1653–1697 (DVNECSELNNRMSLCKNAKCINTEGSYKCLCLPGYIPSDKPNYCT). Ser1678 is a glycosylation site (O-linked (Glc) serine).

The protein belongs to the LTBP family. As to quaternary structure, interacts with TGFB1; associates via disulfide bonds with the Latency-associated peptide chain (LAP) regulatory chain of TGFB1, leading to regulate activation of TGF-beta-1. LTBP1 does not bind directly to TGF-beta-1, the active chain of TGFB1. Interacts (via C-terminal domain) with FBN1 (via N-terminal domain). Interacts with FBN2. Interacts with ADAMTSL2. Interacts with EFEMP2. Post-translationally, contains hydroxylated asparagine residues. Two intrachain disulfide bonds from the TB3 domain are rearranged upon TGFB1 binding, and form interchain bonds with TGFB1 propeptide, anchoring it to the extracellular matrix. In terms of processing, O-glycosylated on serine residues by POGLUT2 and POGLUT3.

The protein localises to the secreted. The protein resides in the extracellular space. It is found in the extracellular matrix. Its function is as follows. Key regulator of transforming growth factor beta (TGFB1, TGFB2 and TGFB3) that controls TGF-beta activation by maintaining it in a latent state during storage in extracellular space. Associates specifically via disulfide bonds with the Latency-associated peptide (LAP), which is the regulatory chain of TGF-beta, and regulates integrin-dependent activation of TGF-beta. Outcompeted by LRRC32/GARP for binding to LAP regulatory chain of TGF-beta. This chain is Latent-transforming growth factor beta-binding protein 1, found in Mus musculus (Mouse).